Here is a 705-residue protein sequence, read N- to C-terminus: Translation initiation factor IF-2 (705 aa).

The interval 40–124 (DDQIKALDKK…QPAAPKEIPS (85 aa)) is disordered. The span at 41 to 58 (DQIKALDKKFKKEQKNDN) shows a compositional bias: basic and acidic residues. Positions 59–77 (KQSTQNNHQKSNNQNQNKG) are enriched in low complexity. Basic residues predominate over residues 94 to 108 (KGNKKNNRNNKKNNK). The region spanning 207–376 (ERPAVVTIMG…GLVAEVQELK (170 aa)) is the tr-type G domain. The segment at 216-223 (GHVDHGKT) is G1. GTP is bound at residue 216–223 (GHVDHGKT). Positions 241–245 (GITQH) are G2. The tract at residues 262–265 (DTPG) is G3. Residues 262-266 (DTPGH) and 316-319 (NKID) each bind GTP. A G4 region spans residues 316-319 (NKID). The interval 352 to 354 (SAL) is G5.

This sequence belongs to the TRAFAC class translation factor GTPase superfamily. Classic translation factor GTPase family. IF-2 subfamily.

The protein localises to the cytoplasm. Its function is as follows. One of the essential components for the initiation of protein synthesis. Protects formylmethionyl-tRNA from spontaneous hydrolysis and promotes its binding to the 30S ribosomal subunits. Also involved in the hydrolysis of GTP during the formation of the 70S ribosomal complex. This is Translation initiation factor IF-2 from Staphylococcus aureus (strain USA300).